Here is a 528-residue protein sequence, read N- to C-terminus: MGKASKATKKFTKNHLKNTIERRKQLARSKKVYGTKNRNSHTKNKLESGTNDNNKNKEDLSKLYSDVTTSNTSHEKDGSEDISVLNVNSKGASLNQVSTQKRRSEKDLLAAIAYCQKLSGTNQADALWKNVEKDLKETLDNVDFDARSKILQDLRLEYAEILLTKFNFEKKGYQNLSSALDTILHIKKFSKFPNGLVTQLCNIFVNHSKAREDIQKAVNHICKIDSSLSVAVFQVFYSPLLDFFKSSPSEVNDFDTLEELQLFLIELLSLNSRFYQKIAFAYLSQLDAHLKRCLKESESSDAYKLIYNWQFTLSLRFWLHVISFLWNDYESISKEISPIAINLTLDCIRLIPTEQYYPLRLHLLKSLVNICRSTRLYIPLSSQFLEMIPFVLRRSSPLSDDKEVMYNFDMYSTLHVPKECLLSKSYRNNVRKEVILLMTEYFAIFSNSIAFPELSAPIIAQLRGLVNESAPGKHVLTFLNKLESTFSFVESRRMNVDFTLNDTSQVEAFEKDLDWRSTPMGKLVSDTT.

2 stretches are compositionally biased toward basic residues: residues Met-1–Leu-16 and Gln-25–Lys-43. A disordered region spans residues Met-1 to Asp-59.

This sequence belongs to the NOC2 family.

The protein resides in the nucleus. Its subcellular location is the nucleolus. This is an uncharacterized protein from Schizosaccharomyces pombe (strain 972 / ATCC 24843) (Fission yeast).